Reading from the N-terminus, the 254-residue chain is Alcohol dehydrogenase 1 (254 aa).

Residue 10-33 (FVAGLGGIGLDTSREIVKSGPKNL) coordinates NAD(+). Serine 138 contributes to the substrate binding site. Tyrosine 151 (proton acceptor) is an active-site residue.

Belongs to the short-chain dehydrogenases/reductases (SDR) family. Homodimer.

The enzyme catalyses a primary alcohol + NAD(+) = an aldehyde + NADH + H(+). It catalyses the reaction a secondary alcohol + NAD(+) = a ketone + NADH + H(+). This Drosophila montana (Fruit fly) protein is Alcohol dehydrogenase 1 (Adh1).